A 282-amino-acid polypeptide reads, in one-letter code: Probable endonuclease 4 (282 aa).

Residues H70, H110, E146, D180, H183, H217, D230, H232, and E262 each contribute to the Zn(2+) site.

It belongs to the AP endonuclease 2 family. Zn(2+) is required as a cofactor.

The catalysed reaction is Endonucleolytic cleavage to 5'-phosphooligonucleotide end-products.. Functionally, endonuclease IV plays a role in DNA repair. It cleaves phosphodiester bonds at apurinic or apyrimidinic (AP) sites, generating a 3'-hydroxyl group and a 5'-terminal sugar phosphate. This Wolinella succinogenes (strain ATCC 29543 / DSM 1740 / CCUG 13145 / JCM 31913 / LMG 7466 / NCTC 11488 / FDC 602W) (Vibrio succinogenes) protein is Probable endonuclease 4.